The chain runs to 189 residues: Putative manganese efflux pump MntP (189 aa).

6 helical membrane-spanning segments follow: residues 3–23, 41–61, 65–85, 104–124, 132–152, and 167–187; these read LSAT…ASIG, LIFG…GLFA, IMEW…CRMI, FWVL…IGVG, IVHT…LGML, and IIGG…HMHL.

It belongs to the MntP (TC 9.B.29) family.

The protein localises to the cell inner membrane. In terms of biological role, probably functions as a manganese efflux pump. The polypeptide is Putative manganese efflux pump MntP (Yersinia pseudotuberculosis serotype O:1b (strain IP 31758)).